The chain runs to 1293 residues: Enterobactin synthase component F (1293 aa).

The segment at 1-301 (MSQHLPLVAA…NVLPLGIHIA (301 aa)) is elongation/condensation. Positions 482–887 (SYREMREQVV…ALPDVEQAVT (406 aa)) are adenylation. The region spanning 971–1046 (APKAGSETII…KLATIIDGEE (76 aa)) is the Carrier domain. Residue S1006 is modified to O-(pantetheine 4'-phosphoryl)serine. Positions 1066–1293 (PTLFCFHPAS…GPIIRATLNR (228 aa)) are thioesterase. The active-site Proton acceptor; for thioesterase activity is the H1271.

The protein belongs to the ATP-dependent AMP-binding enzyme family. EntF subfamily. Proteins EntB, EntD, EntE and EntF are the component of the enterobactin synthase. Components probably do not form a stable complex. EntF acts as a catalytic monomer. Requires pantetheine 4'-phosphate as cofactor. 4'-phosphopantetheine is transferred from CoA to a specific serine of apo-EntF by EntD. Holo-EntF so formed is then acylated with seryl-AMP.

It is found in the cytoplasm. It catalyses the reaction 3 2,3-dihydroxybenzoate + 3 L-serine + 6 ATP = enterobactin + 6 AMP + 6 diphosphate + 4 H(+). The enzyme catalyses holo-[peptidyl-carrier protein] + L-serine + ATP = L-seryl-[peptidyl-carrier protein] + AMP + diphosphate. It functions in the pathway siderophore biosynthesis; enterobactin biosynthesis. In terms of biological role, involved in the biosynthesis of the siderophore enterobactin (enterochelin), which is a macrocyclic trimeric lactone of N-(2,3-dihydroxybenzoyl)-serine. EntF catalyzes the activation of L-serine via ATP-dependent PPi exchange reaction to form seryladenylate. Activated L-serine is loaded onto the peptidyl carrier domain via a thioester linkage to the phosphopanthetheine moiety, forming seryl-S-Ppant-EntF. EntF acts then as the sole catalyst for the formation of the three amide and three ester linkages found in enterobactin, using seryladenylate and 2,3-dihydroxybenzoate-S-Ppant-EntB (DHB-S-Ppant-EntB) as substrates, via the formation of a DHB-Ser-S-Ppant-EntF intermediate. This Escherichia coli O157:H7 protein is Enterobactin synthase component F (entF).